A 513-amino-acid chain; its full sequence is Activin receptor type-2A (513 aa).

The N-terminal stretch at 1-19 (MGAAAKLAFAVFLISCSSG) is a signal peptide. Over 20 to 135 (AILGRSETQE…TSNPVTPKPP (116 aa)) the chain is Extracellular. Cystine bridges form between cysteine 30-cysteine 60, cysteine 50-cysteine 78, cysteine 85-cysteine 104, cysteine 91-cysteine 103, and cysteine 105-cysteine 110. Asparagine 43 and asparagine 66 each carry an N-linked (GlcNAc...) asparagine glycan. A helical transmembrane segment spans residues 136–161 (YYNILLYSLVPLMLIAGIVICAFWVY). Residues 162–513 (RHHKMAYPPV…VDFPPKESSL (352 aa)) lie on the Cytoplasmic side of the membrane. One can recognise a Protein kinase domain in the interval 192 to 485 (LQLLEVKARG…GERITQMQRL (294 aa)). ATP contacts are provided by residues 198-206 (KARGRFGCV) and lysine 219. Catalysis depends on aspartate 322, which acts as the Proton acceptor.

The protein belongs to the protein kinase superfamily. TKL Ser/Thr protein kinase family. TGFB receptor subfamily. As to quaternary structure, part of a complex consisting of MAGI2/ARIP1, ACVR2A, ACVR1B and SMAD3. Interacts with MAGI2/ARIP1. Interacts with type I receptor ACVR1. Interacts with BMP7. Interacts with TSC22D1/TSC-22. Interacts with activin A/INHBA. It depends on Mg(2+) as a cofactor. Mn(2+) serves as cofactor.

It is found in the cell membrane. The enzyme catalyses L-threonyl-[receptor-protein] + ATP = O-phospho-L-threonyl-[receptor-protein] + ADP + H(+). The catalysed reaction is L-seryl-[receptor-protein] + ATP = O-phospho-L-seryl-[receptor-protein] + ADP + H(+). Its function is as follows. On ligand binding, forms a receptor complex consisting of two type II and two type I transmembrane serine/threonine kinases. Type II receptors phosphorylate and activate type I receptors which autophosphorylate, then bind and activate SMAD transcriptional regulators. Receptor for activin A, activin B and inhibin A. Mediates induction of adipogenesis by GDF6. The chain is Activin receptor type-2A from Homo sapiens (Human).